A 317-amino-acid chain; its full sequence is Lipopolysaccharide heptosyltransferase 1 (317 aa).

9 residues coordinate ADP-L-glycero-beta-D-manno-heptose: T187, T188, K192, E222, M242, D261, T262, G263, and H266.

The protein belongs to the glycosyltransferase 9 family.

Its subcellular location is the cell inner membrane. The catalysed reaction is an alpha-Kdo-(2-&gt;4)-alpha-Kdo-(2-&gt;6)-lipid A + ADP-L-glycero-beta-D-manno-heptose = an L-alpha-D-Hep-(1-&gt;5)-[alpha-Kdo-(2-&gt;4)]-alpha-Kdo-(2-&gt;6)-lipid A + ADP + H(+). Its pathway is bacterial outer membrane biogenesis; LPS core biosynthesis. Glycosyltransferase involved in the biosynthesis of the core oligosaccharide region of lipopolysaccharide (LPS). Catalyzes the addition of the first heptose unit to one 3-deoxy-D-manno-octulosonic acid (Kdo) residue of the Kdo2-lipid A module. This chain is Lipopolysaccharide heptosyltransferase 1, found in Salmonella typhimurium (strain LT2 / SGSC1412 / ATCC 700720).